A 230-amino-acid chain; its full sequence is Biosynthetic peptidoglycan transglycosylase (230 aa).

Residues 10–30 (IFLFFIAVIFVYQFWIFSQIV) form a helical membrane-spanning segment.

The protein belongs to the glycosyltransferase 51 family.

The protein resides in the cell inner membrane. It carries out the reaction [GlcNAc-(1-&gt;4)-Mur2Ac(oyl-L-Ala-gamma-D-Glu-L-Lys-D-Ala-D-Ala)](n)-di-trans,octa-cis-undecaprenyl diphosphate + beta-D-GlcNAc-(1-&gt;4)-Mur2Ac(oyl-L-Ala-gamma-D-Glu-L-Lys-D-Ala-D-Ala)-di-trans,octa-cis-undecaprenyl diphosphate = [GlcNAc-(1-&gt;4)-Mur2Ac(oyl-L-Ala-gamma-D-Glu-L-Lys-D-Ala-D-Ala)](n+1)-di-trans,octa-cis-undecaprenyl diphosphate + di-trans,octa-cis-undecaprenyl diphosphate + H(+). It participates in cell wall biogenesis; peptidoglycan biosynthesis. Its function is as follows. Peptidoglycan polymerase that catalyzes glycan chain elongation from lipid-linked precursors. This is Biosynthetic peptidoglycan transglycosylase from Nitrosospira multiformis (strain ATCC 25196 / NCIMB 11849 / C 71).